A 133-amino-acid chain; its full sequence is MIIGIGSDLCDIRRIEKTLERFGDRFTHKSFTEIERRRSERKPDRASSYAKRFAAKEACSKALGTGLKGGVHLSGMGVVNLPSGKPTMALTGGAAERLASMVPEGMTPVIHLSLTDDHPYAQAFVIIEAVAAT.

Positions 8 and 57 each coordinate Mg(2+).

It belongs to the P-Pant transferase superfamily. AcpS family. Mg(2+) is required as a cofactor.

Its subcellular location is the cytoplasm. It catalyses the reaction apo-[ACP] + CoA = holo-[ACP] + adenosine 3',5'-bisphosphate + H(+). Transfers the 4'-phosphopantetheine moiety from coenzyme A to a Ser of acyl-carrier-protein. This chain is Holo-[acyl-carrier-protein] synthase, found in Caulobacter sp. (strain K31).